The primary structure comprises 450 residues: UDP-N-acetylmuramate--L-alanine ligase (450 aa).

Position 112–118 (112–118 (GTHGKTT)) interacts with ATP.

Belongs to the MurCDEF family.

The protein resides in the cytoplasm. The enzyme catalyses UDP-N-acetyl-alpha-D-muramate + L-alanine + ATP = UDP-N-acetyl-alpha-D-muramoyl-L-alanine + ADP + phosphate + H(+). It participates in cell wall biogenesis; peptidoglycan biosynthesis. Functionally, cell wall formation. The sequence is that of UDP-N-acetylmuramate--L-alanine ligase from Endomicrobium trichonymphae.